The following is a 55-amino-acid chain: UPF0391 membrane protein RSp1666 (55 aa).

2 helical membrane-spanning segments follow: residues 5–25 and 33–53; these read AVIFFIIALIAALFGFGGIAA and ILFMIFVVLFVVSLFWGLVAG.

The protein belongs to the UPF0391 family.

The protein resides in the cell membrane. This Ralstonia nicotianae (strain ATCC BAA-1114 / GMI1000) (Ralstonia solanacearum) protein is UPF0391 membrane protein RSp1666.